A 186-amino-acid polypeptide reads, in one-letter code: Ribosome-recycling factor (186 aa).

This sequence belongs to the RRF family.

The protein localises to the cytoplasm. Responsible for the release of ribosomes from messenger RNA at the termination of protein biosynthesis. May increase the efficiency of translation by recycling ribosomes from one round of translation to another. This is Ribosome-recycling factor from Bordetella petrii (strain ATCC BAA-461 / DSM 12804 / CCUG 43448).